Here is a 1057-residue protein sequence, read N- to C-terminus: Carbamoyl phosphate synthase large chain (1057 aa).

Residues 1–401 (MPKRNDIKTI…SLLKAIRSLE (401 aa)) are carboxyphosphate synthetic domain. R129, R169, G175, G176, K208, I210, E215, G241, I242, H243, Q284, and E298 together coordinate ATP. The ATP-grasp 1 domain maps to 133–327 (RTLMNDLNVP…IAKLAAKIAV (195 aa)). Mg(2+)-binding residues include Q284, E298, and N300. Mn(2+)-binding residues include Q284, E298, and N300. Residues 402 to 546 (YGVHHLGLPN…YGTYETENES (145 aa)) are oligomerization domain. Positions 547–929 (IVTDKEKILV…ALFKGLTGSG (383 aa)) are carbamoyl phosphate synthetic domain. The ATP-grasp 2 domain maps to 671–861 (EALLRKINVP…MAQLAMRAII (191 aa)). ATP-binding residues include R707, R746, L748, E752, G777, V778, H779, S780, Q820, and E832. The Mg(2+) site is built by Q820, E832, and N834. Mn(2+) contacts are provided by Q820, E832, and N834. In terms of domain architecture, MGS-like spans 930–1057 (VEVKDHGTVL…ESMTFTMRQM (128 aa)). An allosteric domain region spans residues 930–1057 (VEVKDHGTVL…ESMTFTMRQM (128 aa)).

The protein belongs to the CarB family. Composed of two chains; the small (or glutamine) chain promotes the hydrolysis of glutamine to ammonia, which is used by the large (or ammonia) chain to synthesize carbamoyl phosphate. Tetramer of heterodimers (alpha,beta)4. Mg(2+) is required as a cofactor. The cofactor is Mn(2+).

The enzyme catalyses hydrogencarbonate + L-glutamine + 2 ATP + H2O = carbamoyl phosphate + L-glutamate + 2 ADP + phosphate + 2 H(+). It carries out the reaction hydrogencarbonate + NH4(+) + 2 ATP = carbamoyl phosphate + 2 ADP + phosphate + 2 H(+). It functions in the pathway amino-acid biosynthesis; L-arginine biosynthesis; carbamoyl phosphate from bicarbonate: step 1/1. The protein operates within pyrimidine metabolism; UMP biosynthesis via de novo pathway; (S)-dihydroorotate from bicarbonate: step 1/3. Functionally, large subunit of the glutamine-dependent carbamoyl phosphate synthetase (CPSase). CPSase catalyzes the formation of carbamoyl phosphate from the ammonia moiety of glutamine, carbonate, and phosphate donated by ATP, constituting the first step of 2 biosynthetic pathways, one leading to arginine and/or urea and the other to pyrimidine nucleotides. The large subunit (synthetase) binds the substrates ammonia (free or transferred from glutamine from the small subunit), hydrogencarbonate and ATP and carries out an ATP-coupled ligase reaction, activating hydrogencarbonate by forming carboxy phosphate which reacts with ammonia to form carbamoyl phosphate. The protein is Carbamoyl phosphate synthase large chain of Staphylococcus aureus (strain Mu3 / ATCC 700698).